Reading from the N-terminus, the 156-residue chain is Ribosome maturation factor RimP (156 aa).

This sequence belongs to the RimP family.

The protein localises to the cytoplasm. Its function is as follows. Required for maturation of 30S ribosomal subunits. The polypeptide is Ribosome maturation factor RimP (Dictyoglomus turgidum (strain DSM 6724 / Z-1310)).